Here is a 256-residue protein sequence, read N- to C-terminus: Imidazole glycerol phosphate synthase subunit hisF1 (256 aa).

Residues Asp-11 and Asp-130 contribute to the active site.

Belongs to the HisA/HisF family. In terms of assembly, heterodimer of HisH and HisF.

The protein resides in the cytoplasm. It carries out the reaction 5-[(5-phospho-1-deoxy-D-ribulos-1-ylimino)methylamino]-1-(5-phospho-beta-D-ribosyl)imidazole-4-carboxamide + L-glutamine = D-erythro-1-(imidazol-4-yl)glycerol 3-phosphate + 5-amino-1-(5-phospho-beta-D-ribosyl)imidazole-4-carboxamide + L-glutamate + H(+). Its pathway is amino-acid biosynthesis; L-histidine biosynthesis; L-histidine from 5-phospho-alpha-D-ribose 1-diphosphate: step 5/9. IGPS catalyzes the conversion of PRFAR and glutamine to IGP, AICAR and glutamate. The HisF subunit catalyzes the cyclization activity that produces IGP and AICAR from PRFAR using the ammonia provided by the HisH subunit. The sequence is that of Imidazole glycerol phosphate synthase subunit hisF1 (hisF1) from Parasynechococcus marenigrum (strain WH8102).